The chain runs to 557 residues: Potassium-transporting ATPase potassium-binding subunit (557 aa).

12 helical membrane passes run 5–25 (GFLL…PLGS), 63–83 (LSAI…MLLG), 132–152 (GLTV…FALI), 170–190 (LLRI…LFFI), 253–273 (FVQM…FGEV), 283–303 (LLWA…WAEV), 329–349 (VLVS…AVIA), 356–376 (ALGG…FGGV), 379–399 (GLYG…LMIG), 416–436 (LTAL…ALAM), 484–504 (LLAL…MAIA), and 526–546 (LFVG…FIPA).

This sequence belongs to the KdpA family. The system is composed of three essential subunits: KdpA, KdpB and KdpC.

It is found in the cell inner membrane. In terms of biological role, part of the high-affinity ATP-driven potassium transport (or Kdp) system, which catalyzes the hydrolysis of ATP coupled with the electrogenic transport of potassium into the cytoplasm. This subunit binds the periplasmic potassium ions and delivers the ions to the membrane domain of KdpB through an intramembrane tunnel. The protein is Potassium-transporting ATPase potassium-binding subunit of Escherichia coli O127:H6 (strain E2348/69 / EPEC).